A 536-amino-acid chain; its full sequence is Probable E3 ubiquitin-protein ligase ARI13 (536 aa).

The TRIAD supradomain stretch occupies residues 83-328 (KISSCGICFK…GFYKFCNVSM (246 aa)). Zn(2+)-binding residues include Cys87, Cys90, Cys106, His108, Cys111, Cys114, Cys135, Cys140, Cys180, Cys185, Cys210, Cys212, Cys217, Cys220, His225, Cys230, Cys277, Cys280, Cys297, Cys299, Cys304, Cys307, His314, and Cys324. The segment at 87-140 (CGICFKTCDDGDYLISTPFCSHMFCKSCWRKYLEKNFYLVEKTQTRISCPHGAC) adopts an RING-type 1 zinc-finger fold. The IBR-type zinc finger occupies 158–230 (EMYVEYILRS…MLESHKPVTC (73 aa)). The RING-type 2; atypical zinc-finger motif lies at 277 to 307 (CPHCLRPADLGTKQYLRFLTCACNGRFCWKC). The RanBP2-type zinc-finger motif lies at 495–526 (DYGGLFWLCDRCTYGNTWFHKECLMCSDDIAA).

This sequence belongs to the RBR family. Ariadne subfamily. It depends on Zn(2+) as a cofactor.

It catalyses the reaction [E2 ubiquitin-conjugating enzyme]-S-ubiquitinyl-L-cysteine + [acceptor protein]-L-lysine = [E2 ubiquitin-conjugating enzyme]-L-cysteine + [acceptor protein]-N(6)-ubiquitinyl-L-lysine.. Its pathway is protein modification; protein ubiquitination. Might act as an E3 ubiquitin-protein ligase, or as part of E3 complex, which accepts ubiquitin from specific E2 ubiquitin-conjugating enzymes and then transfers it to substrates. The protein is Probable E3 ubiquitin-protein ligase ARI13 (ARI13) of Arabidopsis thaliana (Mouse-ear cress).